The following is a 231-amino-acid chain: NADH-ubiquinone oxidoreductase chain 4 (231 aa).

7 consecutive transmembrane segments (helical) span residues 1–21 (PIAG…YGII), 34–54 (LFLP…LTCL), 63–85 (IAYS…TPWG), 89–111 (AMAL…NTTY), 128–148 (ILPM…AIPP), 156–176 (LLIM…LGLS), and 211–231 (LLIA…ELVI).

It belongs to the complex I subunit 4 family.

The protein localises to the mitochondrion membrane. The enzyme catalyses a ubiquinone + NADH + 5 H(+)(in) = a ubiquinol + NAD(+) + 4 H(+)(out). Functionally, core subunit of the mitochondrial membrane respiratory chain NADH dehydrogenase (Complex I) that is believed to belong to the minimal assembly required for catalysis. Complex I functions in the transfer of electrons from NADH to the respiratory chain. The immediate electron acceptor for the enzyme is believed to be ubiquinone. This chain is NADH-ubiquinone oxidoreductase chain 4 (MT-ND4), found in Crotalus adamanteus (Eastern diamondback rattlesnake).